The primary structure comprises 261 residues: Cytochrome c oxidase subunit 3 (261 aa).

Residues 1–15 (MTHQTHAYHMVNPSP) are Mitochondrial matrix-facing. A helical membrane pass occupies residues 16–34 (WPLTGALSALLMTSGLTMW). Topologically, residues 35–40 (FHYNST) are mitochondrial intermembrane. A helical transmembrane segment spans residues 41 to 66 (ILLMLGLTTNMLTMYQWWRDIIREST). The Mitochondrial matrix segment spans residues 67–72 (FQGHHT). Residues 73 to 105 (PTVQKGLRYGMILFIISEVLFFTGFFWAFYHSS) form a helical membrane-spanning segment. Topologically, residues 106 to 128 (LAPTPELGGCWPPTGIHPLNPLE) are mitochondrial intermembrane. Residues 129-152 (VPLLNTSVLLASGVSITWAHHSLM) traverse the membrane as a helical segment. The Mitochondrial matrix segment spans residues 153-155 (EGD). A helical membrane pass occupies residues 156–183 (RNHMLQALFITIALGIYFTLLQASEYYE). Residues 184–190 (APFTISD) are Mitochondrial intermembrane-facing. Residues 191–223 (GVYGSTFFVATGFHGLHVIIGSTFLIVCFFRQL) traverse the membrane as a helical segment. Residues 224-232 (KFHFTSSHH) lie on the Mitochondrial matrix side of the membrane. A helical transmembrane segment spans residues 233 to 256 (FGFEAAAWYWHFVDVVWLFLYVSI). At 257-261 (YWWGS) the chain is on the mitochondrial intermembrane side.

It belongs to the cytochrome c oxidase subunit 3 family. In terms of assembly, component of the cytochrome c oxidase (complex IV, CIV), a multisubunit enzyme composed of 14 subunits. The complex is composed of a catalytic core of 3 subunits MT-CO1, MT-CO2 and MT-CO3, encoded in the mitochondrial DNA, and 11 supernumerary subunits COX4I, COX5A, COX5B, COX6A, COX6B, COX6C, COX7A, COX7B, COX7C, COX8 and NDUFA4, which are encoded in the nuclear genome. The complex exists as a monomer or a dimer and forms supercomplexes (SCs) in the inner mitochondrial membrane with NADH-ubiquinone oxidoreductase (complex I, CI) and ubiquinol-cytochrome c oxidoreductase (cytochrome b-c1 complex, complex III, CIII), resulting in different assemblies (supercomplex SCI(1)III(2)IV(1) and megacomplex MCI(2)III(2)IV(2)).

The protein resides in the mitochondrion inner membrane. The enzyme catalyses 4 Fe(II)-[cytochrome c] + O2 + 8 H(+)(in) = 4 Fe(III)-[cytochrome c] + 2 H2O + 4 H(+)(out). In terms of biological role, component of the cytochrome c oxidase, the last enzyme in the mitochondrial electron transport chain which drives oxidative phosphorylation. The respiratory chain contains 3 multisubunit complexes succinate dehydrogenase (complex II, CII), ubiquinol-cytochrome c oxidoreductase (cytochrome b-c1 complex, complex III, CIII) and cytochrome c oxidase (complex IV, CIV), that cooperate to transfer electrons derived from NADH and succinate to molecular oxygen, creating an electrochemical gradient over the inner membrane that drives transmembrane transport and the ATP synthase. Cytochrome c oxidase is the component of the respiratory chain that catalyzes the reduction of oxygen to water. Electrons originating from reduced cytochrome c in the intermembrane space (IMS) are transferred via the dinuclear copper A center (CU(A)) of subunit 2 and heme A of subunit 1 to the active site in subunit 1, a binuclear center (BNC) formed by heme A3 and copper B (CU(B)). The BNC reduces molecular oxygen to 2 water molecules using 4 electrons from cytochrome c in the IMS and 4 protons from the mitochondrial matrix. In Tragelaphus imberbis (Lesser kudu), this protein is Cytochrome c oxidase subunit 3 (MT-CO3).